Here is a 239-residue protein sequence, read N- to C-terminus: Ankyrin repeat domain-containing protein 49 (239 aa).

The residue at position 49 (Ser49) is a Phosphoserine. ANK repeat units follow at residues 73 to 103, 107 to 136, 140 to 169, and 173 to 206; these read DPSR…HVNT, DEYT…DVHA, DGWT…DINA, and GLLT…GLKN.

In terms of tissue distribution, widely expressed in fetus, at a high level in fetal liver, brain and lung.

The protein resides in the nucleus. Functionally, induces HBG1 expression. May have a role in spermatogenesis where it promotes autophagy in response to serum starvation, via the NF-kappaB pathway. This is Ankyrin repeat domain-containing protein 49 (ANKRD49) from Homo sapiens (Human).